The sequence spans 522 residues: Gypsy retrotransposon integrase-like protein 1 (522 aa).

An Integrase catalytic domain is found at 135-292; the sequence is KVENPWSLVT…TPYFQMFSRN (158 aa). Serine 502 carries the phosphoserine modification.

In terms of tissue distribution, widely expressed. Also found in tumors originating from parathyroid gland, colon, stomach, bladder, uterus and prostate.

The polypeptide is Gypsy retrotransposon integrase-like protein 1 (GIN1) (Homo sapiens (Human)).